The sequence spans 1013 residues: Adhesion G-protein coupled receptor G2 (1013 aa).

The first 37 residues, Met-1 to Ser-37, serve as a signal peptide directing secretion. The Extracellular segment spans residues Leu-38 to Ala-623. Residues Asn-44, Asn-78, Asn-92, Asn-104, Asn-128, Asn-137, Asn-155, Asn-179, Asn-187, Asn-366, Asn-431, Asn-452, Asn-457, Asn-524, Asn-538, Asn-543, Asn-547, and Asn-593 are each glycosylated (N-linked (GlcNAc...) asparagine). Positions Asn-457–Ser-615 constitute a GAIN-B domain. 2 cysteine pairs are disulfide-bonded: Cys-566/Cys-597 and Cys-585/Cys-599. A GPS region spans residues Cys-566–Ser-615. The tract at residues Ser-604–Ser-615 is stachel. A helical transmembrane segment spans residues Leu-624–Val-644. The Cytoplasmic segment spans residues Thr-645–Gln-663. A helical transmembrane segment spans residues Leu-664 to Tyr-684. At Asn-685 to Gly-688 the chain is on the extracellular side. The chain crosses the membrane as a helical span at residues Phe-689 to Gly-709. An intrachain disulfide couples Cys-690 to Cys-774. The Cytoplasmic segment spans residues Leu-710–Lys-733. A helical transmembrane segment spans residues Phe-734–Pro-754. Over Asp-755–Thr-785 the chain is Extracellular. Asn-777 carries an N-linked (GlcNAc...) asparagine glycan. A helical membrane pass occupies residues Val-786–Val-806. Over Gln-807–Ser-830 the chain is Cytoplasmic. The helical transmembrane segment at Ile-831 to Pro-851 threads the bilayer. At Val-852–Asn-853 the chain is on the extracellular side. The N-linked (GlcNAc...) asparagine glycan is linked to Asn-853. The helical transmembrane segment at Leu-854–Phe-874 threads the bilayer. Asn-864 is a 3beta-hydroxyandrost-5-en-17-one binding site. The Cytoplasmic segment spans residues Tyr-875–Met-1013. Position 1006 is a phosphoserine (Ser-1006).

This sequence belongs to the G-protein coupled receptor 2 family. Adhesion G-protein coupled receptor (ADGR) subfamily. As to quaternary structure, heterodimer of 2 chains generated by proteolytic processing; the large extracellular N-terminal fragment and the membrane-bound C-terminal fragment predominantly remain associated and non-covalently linked. Interacts with CFTR. In terms of processing, proteolytically cleaved into 2 subunits, an extracellular subunit and a seven-transmembrane subunit. Highly glycosylated. Epididymis-specific expression (at protein level). Associated with apical membranes of efferent ductule and proximal epididymal duct epithelia.

The protein resides in the apical cell membrane. Forms a heterodimer of 2 chains generated by proteolytic processing that remain associated through non-covalent interactions mediated by the GAIN-B domain. In the inactivated receptor, the Stachel sequence (also named stalk) is embedded in the GAIN-B domain, where it adopts a beta-strand conformation. On activation, the Stachel moves into the 7 transmembrane region and adopts a twisted hook-shaped configuration that forms contacts within the receptor, leading to coupling of a G-alpha protein, which activates signaling. The cleaved GAIN-B and N-terminal domains can then dissociate from the rest of the receptor. Deoxycorticosterone (DOC) acts as an antagonist of ADGRG2. In terms of biological role, adhesion G-protein coupled receptor (aGPCR) for steroid hormones, such as dehydroepiandrosterone (DHEA; also named 3beta-hydroxyandrost-5-en-17-one) and androstenedione. Involved in a signal transduction pathway controlling epididymal function and male fertility. Ligand binding causes a conformation change that triggers signaling via guanine nucleotide-binding proteins (G proteins) and modulates the activity of downstream effectors, such as adenylate cyclase. ADGRG2 is coupled to G(s) G proteins and mediates activation of adenylate cyclase activity. Also able to couple with G(q) G proteins in vitro. May regulate fluid exchange within epididymis. This chain is Adhesion G-protein coupled receptor G2, found in Rattus norvegicus (Rat).